Consider the following 501-residue polypeptide: 2,3-bisphosphoglycerate-independent phosphoglycerate mutase (501 aa).

2 residues coordinate Mn(2+): Asp-12 and Ser-62. Residue Ser-62 is the Phosphoserine intermediate of the active site. Residues His-121, 150–151 (RD), Arg-182, Arg-188, 253–256 (RSDR), and Lys-322 each bind substrate. Residues Asp-389, His-393, Asp-430, His-431, and His-449 each coordinate Mn(2+).

It belongs to the BPG-independent phosphoglycerate mutase family. As to quaternary structure, monomer. Requires Mn(2+) as cofactor.

The catalysed reaction is (2R)-2-phosphoglycerate = (2R)-3-phosphoglycerate. The protein operates within carbohydrate degradation; glycolysis; pyruvate from D-glyceraldehyde 3-phosphate: step 3/5. Catalyzes the interconversion of 2-phosphoglycerate and 3-phosphoglycerate. The protein is 2,3-bisphosphoglycerate-independent phosphoglycerate mutase of Ehrlichia ruminantium (strain Gardel).